A 218-amino-acid polypeptide reads, in one-letter code: Small ribosomal subunit protein mS34 (218 aa).

The tract at residues 180-218 is disordered; sequence KNGDTSTEEPMLNVQRIRMEPWDYPAKQEDKGRAKGTPV. The span at 196–212 shows a compositional bias: basic and acidic residues; the sequence is IRMEPWDYPAKQEDKGR.

Belongs to the mitochondrion-specific ribosomal protein mS34 family. Component of the mitochondrial small ribosomal subunit (mt-SSU). Mature mammalian 55S mitochondrial ribosomes consist of a small (28S) and a large (39S) subunit. The 28S small subunit contains a 12S ribosomal RNA (12S mt-rRNA) and 30 different proteins. The 39S large subunit contains a 16S rRNA (16S mt-rRNA), a copy of mitochondrial valine transfer RNA (mt-tRNA(Val)), which plays an integral structural role, and 52 different proteins.

The protein resides in the mitochondrion. Its function is as follows. Required for mitochondrial translation, plays a role in maintaining the stability of the small ribosomal subunit and the 12S rRNA that are required for mitoribosome formation. This chain is Small ribosomal subunit protein mS34 (MRPS34), found in Homo sapiens (Human).